We begin with the raw amino-acid sequence, 1323 residues long: Glutamate receptor ionotropic, NMDA 2D (1323 aa).

The first 27 residues, Met-1–Pro-27, serve as a signal peptide directing secretion. Topologically, residues Phe-28–Ser-579 are extracellular. N-linked (GlcNAc...) asparagine glycosylation occurs at Asn-89. A disulfide bridge connects residues Cys-101 and Cys-345. Residues Asn-349, Asn-363, Asn-381, and Asn-464 are each glycosylated (N-linked (GlcNAc...) asparagine). 2 disulfide bridges follow: Cys-452-Cys-480 and Cys-459-Cys-481. Positions 536, 538, and 543 each coordinate L-glutamate. An N-linked (GlcNAc...) asparagine glycan is attached at Asn-566. A helical membrane pass occupies residues Pro-580–Phe-601. Topologically, residues Glu-602–Ile-626 are cytoplasmic. Positions Gly-627 to Phe-638 form an intramembrane region, discontinuously helical. The pore-forming stretch occupies residues Lys-628–Pro-647. The Cytoplasmic portion of the chain corresponds to Asn-639–Thr-650. Residues Thr-651–Thr-671 form a helical membrane-spanning segment. At Ala-672–Asp-840 the chain is on the extracellular side. The N-linked (GlcNAc...) asparagine glycan is linked to Asn-712. Positions 714, 715, and 756 each coordinate L-glutamate. A disulfide bond links Cys-770 and Cys-825. Residues Asn-841–His-864 traverse the membrane as a helical segment. The Cytoplasmic portion of the chain corresponds to Leu-865–Val-1323. Disordered regions lie at residues Glu-897–Ala-952, Ala-977–Gly-1112, and Pro-1201–Val-1323. Positions Ala-899–Phe-929 are enriched in pro residues. Residues Pro-931–Trp-940 show a composition bias toward basic and acidic residues. Over residues Ala-977–Pro-986 the composition is skewed to low complexity. Over residues Leu-987–Ser-1001 the composition is skewed to pro residues. Residues Ala-1030–Pro-1039 show a composition bias toward low complexity. The segment covering Thr-1080 to Cys-1092 has biased composition (pro residues). The segment covering Pro-1208–His-1228 has biased composition (basic residues). Position 1303 is an omega-N-methylarginine (Arg-1303). Ser-1313 is modified (phosphoserine). The short motif at Ser-1321 to Val-1323 is the PDZ-binding element.

It belongs to the glutamate-gated ion channel (TC 1.A.10.1) family. NR2D/GRIN2D subfamily. Heterotetramer. Forms heterotetrameric channels composed of two GluN1/zeta subunits (GRIN1), and two identical GluN2/epsilon subunits (GRIN2A, GRIN2B, GRIN2C or GRIN2D) or GluN3 subunits (GRIN3A or GRIN3B) (in vitro). In vivo, the subunit composition may depend on the expression levels of the different subunits. Interacts with PDZ domains of PATJ and DLG4. Detected in neonate brain synaptosomes (at protein level).

It localises to the cell membrane. The protein resides in the postsynaptic cell membrane. It carries out the reaction Ca(2+)(in) = Ca(2+)(out). It catalyses the reaction Na(+)(in) = Na(+)(out). The catalysed reaction is K(+)(in) = K(+)(out). In terms of biological role, component of N-methyl-D-aspartate (NMDA) receptors (NMDARs) that function as heterotetrameric, ligand-gated cation channels with high calcium permeability and voltage-dependent block by Mg(2+). Participates in synaptic plasticity for learning and memory formation. Channel activation requires binding of the neurotransmitter L-glutamate to the GluN2 subunit, glycine or D-serine binding to the GluN1 subunit, plus membrane depolarization to eliminate channel inhibition by Mg(2+). NMDARs mediate simultaneously the potasium efflux and the influx of calcium and sodium. Each GluN2 subunit confers differential attributes to channel properties, including activation, deactivation and desensitization kinetics, pH sensitivity, Ca2(+) permeability, and binding to allosteric modulators. The polypeptide is Glutamate receptor ionotropic, NMDA 2D (Mus musculus (Mouse)).